The chain runs to 97 residues: Large ribosomal subunit protein uL23 (97 aa).

This sequence belongs to the universal ribosomal protein uL23 family. Part of the 50S ribosomal subunit. Contacts protein L29, and trigger factor when it is bound to the ribosome.

Its function is as follows. One of the early assembly proteins it binds 23S rRNA. One of the proteins that surrounds the polypeptide exit tunnel on the outside of the ribosome. Forms the main docking site for trigger factor binding to the ribosome. The polypeptide is Large ribosomal subunit protein uL23 (Sulfurihydrogenibium sp. (strain YO3AOP1)).